Consider the following 354-residue polypeptide: Divinyl chlorophyll a/b light-harvesting protein PcbF (354 aa).

6 helical membrane-spanning segments follow: residues 27–47 (FIAS…SNTL), 88–108 (VVTL…GGLL), 140–160 (FILG…VEWA), 201–221 (VMGG…FHAI), 248–268 (AILS…AFWC), and 315–335 (TANF…WHAL).

The protein belongs to the PsbB/PsbC family. IsiA/Pcb subfamily. The antenna complex consists of divinyl chlorophylls (a and b) and divinyl chlorophyll a/b binding proteins and binds more divinyl chlorophyll b than does the antenna complex from high-light-adapted Prochlorococcus. Requires divinyl chlorophyll a as cofactor. Divinyl chlorophyll b is required as a cofactor.

It is found in the cellular thylakoid membrane. Its function is as follows. The antenna complex functions as a light receptor, it captures and delivers excitation energy to photosystems II and I. The Prochlorales pcb genes are not related to higher plant LHCs. The protein is Divinyl chlorophyll a/b light-harvesting protein PcbF (pcbF) of Prochlorococcus marinus (strain SARG / CCMP1375 / SS120).